A 49-amino-acid polypeptide reads, in one-letter code: Venom peptide 3 (49 aa).

The signal sequence occupies residues 1–23 (MRFTFVLVIAATVAVLGFFGINA). AXPX repeat units lie at residues 23-26 (AEPM) and 31-34 (AEPY). Positions 24-37 (EPMPDPHAEPYPDA) are excised as a propeptide. L48 is modified (leucine amide).

In terms of tissue distribution, expressed by the venom gland.

It is found in the secreted. This Eumenes pomiformis (Potter wasp) protein is Venom peptide 3.